Here is a 336-residue protein sequence, read N- to C-terminus: HTH-type transcriptional regulator RafR (336 aa).

An HTH lacI-type domain is found at 2 to 55; the sequence is SLKAIATTLGISVTTVSRALGGFSDVAASTRERVEAEARRRGYRPNTQARRLKT. The H-T-H motif DNA-binding region spans 3–22; the sequence is LKAIATTLGISVTTVSRALG.

As to quaternary structure, homodimer.

Functionally, repressor that negatively controls the expression of the raffinose (raf) operon by binding to the raf operator (rafO) DNA. Acts by binding to two operator sites, O1 and 02, which flank the -35 raf promoter box. RafR bound to 02 alone results in 45 % repression of transcription, whereas RafR bound to O1 leads to only 6% repression. The sequence is that of HTH-type transcriptional regulator RafR from Escherichia coli.